The chain runs to 181 residues: ATP-dependent protease subunit HslV (181 aa).

The active site involves T6. Residues A162, C165, and T168 each contribute to the Na(+) site.

The protein belongs to the peptidase T1B family. HslV subfamily. In terms of assembly, a double ring-shaped homohexamer of HslV is capped on each side by a ring-shaped HslU homohexamer. The assembly of the HslU/HslV complex is dependent on binding of ATP.

It is found in the cytoplasm. The enzyme catalyses ATP-dependent cleavage of peptide bonds with broad specificity.. With respect to regulation, allosterically activated by HslU binding. Its function is as follows. Protease subunit of a proteasome-like degradation complex believed to be a general protein degrading machinery. This is ATP-dependent protease subunit HslV from Solidesulfovibrio magneticus (strain ATCC 700980 / DSM 13731 / RS-1) (Desulfovibrio magneticus).